The following is a 578-amino-acid chain: Cytochrome P450 monooxygenase fsoE (578 aa).

The helical transmembrane segment at 28–48 (LLMAVAITYAISWINWFFTSW) threads the bilayer. Cys-517 serves as a coordination point for heme.

It belongs to the cytochrome P450 family. The cofactor is heme.

Its subcellular location is the membrane. It catalyses the reaction 3-O-(beta-D-glucopyranosyl)-isomotiol + 2 reduced [NADPH--hemoprotein reductase] + 2 O2 = 2-deacetoxyfuscoatroside + 2 oxidized [NADPH--hemoprotein reductase] + 2 H2O + 3 H(+). It carries out the reaction 3-O-(beta-D-glucopyranosyl)-2alpha-hydroxyisomotiol + 2 reduced [NADPH--hemoprotein reductase] + 2 O2 = 2-deacetylfuscoatroside + 2 oxidized [NADPH--hemoprotein reductase] + 2 H2O + 3 H(+). The catalysed reaction is 3-O-(beta-D-glucopyranosyl)-2alpha-acetoxyisomotiol + 2 reduced [NADPH--hemoprotein reductase] + 2 O2 = fuscoatroside + 2 oxidized [NADPH--hemoprotein reductase] + 2 H2O + 3 H(+). The enzyme catalyses isomotiol + reduced [NADPH--hemoprotein reductase] + O2 = 19beta-hydroxyisomotiol + oxidized [NADPH--hemoprotein reductase] + H2O + H(+). It catalyses the reaction 2alpha-hydroxyisomotiol + reduced [NADPH--hemoprotein reductase] + O2 = 2alpha,19beta-dihydroxyisomotiol + oxidized [NADPH--hemoprotein reductase] + H2O + H(+). It carries out the reaction 2alpha,19beta-dihydroxyisomotiol + reduced [NADPH--hemoprotein reductase] + O2 = 2alpha-hydroxyismotiol-19-one + oxidized [NADPH--hemoprotein reductase] + 2 H2O + H(+). The catalysed reaction is 2alpha-hydroxyismotiol-19-one + 2 reduced [NADPH--hemoprotein reductase] + O2 = 2-deacetyl,3-deglucopyranosyl-fuscoatroside + 2 oxidized [NADPH--hemoprotein reductase] + H2O + 3 H(+). It participates in secondary metabolite biosynthesis; terpenoid biosynthesis. Functionally, cytochrome P450 monooxygenase; part of the gene cluster that mediates the biosynthesis of the enfumafungin-type antibiotic, fuscoatroside. Within the pathway, fsoE catalyzes the oxidative cleavage of the c19-C20 bond within the E-ring, resulting in the formation of a carboxyl group and a methyl group. FsoE exhibits preferential substrate selectivity toward glycoside substrates over their aglycones. The fuscoatroside biosynthesis is initiated by the cyclization of 2,3(S)-oxidosqualene through FsoA's terpene cyclase (TC) domain, leading to the formation of the fernane skeleton isomotiol, harboring a fernane triterpene skeleton with a C8-C9 double bond. Subsequently, C2-alpha-hydroxylation mediated by fsoD results in the production of 2-alpha-hydroxy-isomotiol, which is further acetylated by fsoF. The glycosyltransferase (GT) domain of FsoA may convert isomotiol, 2-alpha-hydroxy-isomotiol, and the acetylated derivative of 2-alpha-hydroxy-isomotiol into their corresponding glycosides 3-O-(beta-D-glucopyranosyl)-isomotiol, 3-O-(beta-D-glucopyranosyl)-2-alpha-hydroxy-isomotiol, and 3-O-(beta-D-glucopyranosyl)-2-alpha-acetoxy-isomotiol, which then undergo oxidative cleavage under the action of fsoE to form s 2-deacetoxy-fuscoatroside, 2-deacetyl-fuscoatroside, and fuscoatroside, respectively. Although hydroxylation followed by acetylation of 3-O-(beta-D-glucopyranosyl)-isomotiol and 2-deacetoxy-fuscoatroside by fsoD and fsoF could not be ruled out, this process is likely to occur with difficulty due to bulky steric hindrance caused by the presence of a glycan at C3 in these compounds. Interestingly, fsoE can also utilize the aglycones isomotiol and 2-alpha-hydroxy-isomotiol as substrates to generate 19-beta-hydroxy-isomotiol and 2-alpha,19-beta-dihydroxy-isomotiol, respectively. These reactions occur with lower efficiency. Finally, fsoE can further convert 2-alpha,19-beta-dihydroxy-isomotiol into 2-alpha-hydroxy-ismotiol-19-one and 2-alpha-hydroxy-ismotiol-19-one into 2-deacetyl-3-deglucopyranosyl-fuscoatroside. This is Cytochrome P450 monooxygenase fsoE from Humicola fuscoatra.